A 371-amino-acid polypeptide reads, in one-letter code: Methionine import ATP-binding protein MetN (371 aa).

Residues 29-270 (IRIEGVRKVY…PRHEVTRRFV (242 aa)) form the ABC transporter domain. ATP is bound at residue 67 to 74 (GRSGAGKS).

This sequence belongs to the ABC transporter superfamily. Methionine importer (TC 3.A.1.24) family. The complex is composed of two ATP-binding proteins (MetN), two transmembrane proteins (MetI) and a solute-binding protein (MetQ).

Its subcellular location is the cell inner membrane. The enzyme catalyses L-methionine(out) + ATP + H2O = L-methionine(in) + ADP + phosphate + H(+). It catalyses the reaction D-methionine(out) + ATP + H2O = D-methionine(in) + ADP + phosphate + H(+). Part of the ABC transporter complex MetNIQ involved in methionine import. Responsible for energy coupling to the transport system. The polypeptide is Methionine import ATP-binding protein MetN (Rhodopseudomonas palustris (strain BisA53)).